Consider the following 79-residue polypeptide: Acyl carrier protein (79 aa).

One can recognise a Carrier domain in the interval 2-77 (SEIADKVKKI…DAIDYIEKQK (76 aa)). Serine 37 is modified (O-(pantetheine 4'-phosphoryl)serine).

The protein belongs to the acyl carrier protein (ACP) family. In terms of processing, 4'-phosphopantetheine is transferred from CoA to a specific serine of apo-ACP by AcpS. This modification is essential for activity because fatty acids are bound in thioester linkage to the sulfhydryl of the prosthetic group.

Its subcellular location is the cytoplasm. The protein operates within lipid metabolism; fatty acid biosynthesis. Carrier of the growing fatty acid chain in fatty acid biosynthesis. This Gluconacetobacter diazotrophicus (strain ATCC 49037 / DSM 5601 / CCUG 37298 / CIP 103539 / LMG 7603 / PAl5) protein is Acyl carrier protein.